A 499-amino-acid polypeptide reads, in one-letter code: ATP synthase subunit alpha, chloroplastic (499 aa).

170–177 (GDRQTGKT) provides a ligand contact to ATP.

It belongs to the ATPase alpha/beta chains family. As to quaternary structure, F-type ATPases have 2 components, CF(1) - the catalytic core - and CF(0) - the membrane proton channel. CF(1) has five subunits: alpha(3), beta(3), gamma(1), delta(1), epsilon(1). CF(0) has four main subunits: a, b, b' and c.

The protein resides in the plastid. It is found in the chloroplast thylakoid membrane. It carries out the reaction ATP + H2O + 4 H(+)(in) = ADP + phosphate + 5 H(+)(out). Its function is as follows. Produces ATP from ADP in the presence of a proton gradient across the membrane. The alpha chain is a regulatory subunit. The chain is ATP synthase subunit alpha, chloroplastic from Emiliania huxleyi (Coccolithophore).